We begin with the raw amino-acid sequence, 166 residues long: Co-chaperone protein HscB homolog (166 aa).

In terms of domain architecture, J spans 3–75 (QYFTLFRIEP…IDRAAYLLKT (73 aa)).

The protein belongs to the HscB family. As to quaternary structure, interacts with HscA and stimulates its ATPase activity.

In terms of biological role, co-chaperone involved in the maturation of iron-sulfur cluster-containing proteins. Seems to help targeting proteins to be folded toward HscA. The sequence is that of Co-chaperone protein HscB homolog from Neisseria meningitidis serogroup C (strain 053442).